Here is a 358-residue protein sequence, read N- to C-terminus: Probable arabinan endo-1,5-alpha-L-arabinosidase B (358 aa).

The signal sequence occupies residues 1-16; that stretch reads MVLVATLFSLFTVSLC. The active-site Proton acceptor is the Asp-39. A glycan (N-linked (GlcNAc...) asparagine) is linked at Asn-194. The interval 202-227 is disordered; that stretch reads HLAKHPKTERVNSQDQNPDPLCRDSS. The active-site Proton donor is Glu-233.

This sequence belongs to the glycosyl hydrolase 43 family.

It localises to the secreted. It carries out the reaction Endohydrolysis of (1-&gt;5)-alpha-arabinofuranosidic linkages in (1-&gt;5)-arabinans.. It participates in glycan metabolism; L-arabinan degradation. Its function is as follows. Endo-1,5-alpha-L-arabinanase involved in degradation of pectin. Its preferred substrate is linear 1,5-alpha-L-arabinan. The chain is Probable arabinan endo-1,5-alpha-L-arabinosidase B (abnB) from Aspergillus flavus (strain ATCC 200026 / FGSC A1120 / IAM 13836 / NRRL 3357 / JCM 12722 / SRRC 167).